The primary structure comprises 92 residues: Large ribosomal subunit protein bL25 (92 aa).

Belongs to the bacterial ribosomal protein bL25 family. Part of the 50S ribosomal subunit; part of the 5S rRNA/L5/L18/L25 subcomplex. Contacts the 5S rRNA. Binds to the 5S rRNA independently of L5 and L18.

Functionally, this is one of the proteins that binds to the 5S RNA in the ribosome where it forms part of the central protuberance. The polypeptide is Large ribosomal subunit protein bL25 (Aliivibrio fischeri (strain ATCC 700601 / ES114) (Vibrio fischeri)).